The chain runs to 500 residues: Probable malate:quinone oxidoreductase (500 aa).

Belongs to the MQO family. Requires FAD as cofactor.

It carries out the reaction (S)-malate + a quinone = a quinol + oxaloacetate. Its pathway is carbohydrate metabolism; tricarboxylic acid cycle; oxaloacetate from (S)-malate (quinone route): step 1/1. This is Probable malate:quinone oxidoreductase from Bacillus cereus (strain G9842).